The primary structure comprises 383 residues: Succinate--CoA ligase [ADP-forming] subunit beta (383 aa).

The ATP-grasp domain occupies 9-241 (KEVLHKFNVS…YDEEVKEEIE (233 aa)). ATP contacts are provided by residues Lys46, 53–55 (GRG), Glu99, Ser102, and Glu107. Mg(2+)-binding residues include Asn196 and Asp210. Residues Asn261 and 318–320 (GIM) contribute to the substrate site.

Belongs to the succinate/malate CoA ligase beta subunit family. In terms of assembly, heterotetramer of two alpha and two beta subunits. The cofactor is Mg(2+).

It catalyses the reaction succinate + ATP + CoA = succinyl-CoA + ADP + phosphate. The enzyme catalyses GTP + succinate + CoA = succinyl-CoA + GDP + phosphate. It functions in the pathway carbohydrate metabolism; tricarboxylic acid cycle; succinate from succinyl-CoA (ligase route): step 1/1. Succinyl-CoA synthetase functions in the citric acid cycle (TCA), coupling the hydrolysis of succinyl-CoA to the synthesis of either ATP or GTP and thus represents the only step of substrate-level phosphorylation in the TCA. The beta subunit provides nucleotide specificity of the enzyme and binds the substrate succinate, while the binding sites for coenzyme A and phosphate are found in the alpha subunit. The protein is Succinate--CoA ligase [ADP-forming] subunit beta of Wolbachia sp. subsp. Drosophila simulans (strain wRi).